We begin with the raw amino-acid sequence, 499 residues long: Alpha-amylase 3 (499 aa).

Ca(2+) contacts are provided by N127 and D183. D213 serves as the catalytic Nucleophile. H217 is a binding site for Ca(2+). E248 (proton donor) is an active-site residue.

The protein belongs to the glycosyl hydrolase 13 family. In terms of assembly, monomer. Requires Ca(2+) as cofactor.

The protein resides in the cytoplasm. It carries out the reaction Endohydrolysis of (1-&gt;4)-alpha-D-glucosidic linkages in polysaccharides containing three or more (1-&gt;4)-alpha-linked D-glucose units.. This is Alpha-amylase 3 (amyC) from Dictyoglomus thermophilum (strain ATCC 35947 / DSM 3960 / H-6-12).